The primary structure comprises 187 residues: Endoribonuclease YbeY (187 aa).

Residues histidine 151, histidine 155, and histidine 161 each contribute to the Zn(2+) site.

It belongs to the endoribonuclease YbeY family. Requires Zn(2+) as cofactor.

It is found in the cytoplasm. Single strand-specific metallo-endoribonuclease involved in late-stage 70S ribosome quality control and in maturation of the 3' terminus of the 16S rRNA. This chain is Endoribonuclease YbeY, found in Prochlorococcus marinus (strain MIT 9313).